A 259-amino-acid polypeptide reads, in one-letter code: Tryptophan synthase alpha chain (259 aa).

Active-site proton acceptor residues include E52 and D63.

The protein belongs to the TrpA family. In terms of assembly, tetramer of two alpha and two beta chains.

The enzyme catalyses (1S,2R)-1-C-(indol-3-yl)glycerol 3-phosphate + L-serine = D-glyceraldehyde 3-phosphate + L-tryptophan + H2O. It functions in the pathway amino-acid biosynthesis; L-tryptophan biosynthesis; L-tryptophan from chorismate: step 5/5. The alpha subunit is responsible for the aldol cleavage of indoleglycerol phosphate to indole and glyceraldehyde 3-phosphate. The chain is Tryptophan synthase alpha chain from Streptococcus gordonii (strain Challis / ATCC 35105 / BCRC 15272 / CH1 / DL1 / V288).